A 172-amino-acid polypeptide reads, in one-letter code: Adenylate kinase isoenzyme 6 (172 aa).

ATP-binding residues include Gly-13, Gly-15, Lys-16, Thr-17, and Thr-18. The interval Asn-33–Leu-56 is NMPbind. Residues Thr-108–Asp-118 form an LID region. ATP contacts are provided by Arg-109 and Lys-148.

It belongs to the adenylate kinase family. AK6 subfamily. In terms of assembly, monomer and homodimer. Interacts with small ribosomal subunit protein uS11. Not a structural component of 43S pre-ribosomes, but transiently interacts with them by binding to uS11. Interacts with COIL (via C-terminus).

Its subcellular location is the cytoplasm. The protein localises to the nucleus. It localises to the nucleoplasm. The protein resides in the cajal body. The enzyme catalyses AMP + ATP = 2 ADP. It carries out the reaction ATP + H2O = ADP + phosphate + H(+). Its function is as follows. Broad-specificity nucleoside monophosphate (NMP) kinase that catalyzes the reversible transfer of the terminal phosphate group between nucleoside triphosphates and monophosphates. Also has ATPase activity. Involved in the late cytoplasmic maturation steps of the 40S ribosomal particles, specifically 18S rRNA maturation. While NMP activity is not required for ribosome maturation, ATPase activity is. Associates transiently with small ribosomal subunit protein uS11. ATP hydrolysis breaks the interaction with uS11. May temporarily remove uS11 from the ribosome to enable a conformational change of the ribosomal RNA that is needed for the final maturation step of the small ribosomal subunit. Its NMP activity may have a role in nuclear energy homeostasis. May be involved in regulation of Cajal body (CB) formation. This chain is Adenylate kinase isoenzyme 6, found in Oryctolagus cuniculus (Rabbit).